Here is a 280-residue protein sequence, read N- to C-terminus: uncharacterized protein (280 aa).

3–29 (KKIAIVTGASSGFGLLAAVKLARSFFV) provides a ligand contact to NADP(+). S139 contacts substrate. Y152 (proton acceptor) is an active-site residue.

The protein belongs to the short-chain dehydrogenases/reductases (SDR) family.

This is an uncharacterized protein from Bacillus subtilis (strain 168).